Consider the following 240-residue polypeptide: Transposase for insertion sequence element IS3411 (240 aa).

The region spanning 125 to 240 is the Integrase catalytic domain; sequence VAERPDQLWV…RASMVFTKRR (116 aa).

Involved in the transposition of the insertion sequence. This is Transposase for insertion sequence element IS3411 from Escherichia coli.